Here is a 187-residue protein sequence, read N- to C-terminus: Acireductone dioxygenase 4 (187 aa).

Ala2 is subject to N-acetylalanine. Fe(2+) is bound by residues His89, His91, Glu95, and His134. His89, His91, Glu95, and His134 together coordinate Ni(2+).

It belongs to the acireductone dioxygenase (ARD) family. Fe(2+) is required as a cofactor. Requires Ni(2+) as cofactor.

The protein resides in the cytoplasm. It localises to the nucleus. The catalysed reaction is 1,2-dihydroxy-5-(methylsulfanyl)pent-1-en-3-one + O2 = 4-methylsulfanyl-2-oxobutanoate + formate + 2 H(+). The enzyme catalyses 1,2-dihydroxy-5-(methylsulfanyl)pent-1-en-3-one + O2 = 3-(methylsulfanyl)propanoate + CO + formate + 2 H(+). Its pathway is amino-acid biosynthesis; L-methionine biosynthesis via salvage pathway; L-methionine from S-methyl-5-thio-alpha-D-ribose 1-phosphate: step 5/6. Functionally, catalyzes 2 different reactions between oxygen and the acireductone 1,2-dihydroxy-3-keto-5-methylthiopentene (DHK-MTPene) depending upon the metal bound in the active site. Fe-containing acireductone dioxygenase (Fe-ARD) produces formate and 2-keto-4-methylthiobutyrate (KMTB), the alpha-ketoacid precursor of methionine in the methionine recycle pathway. Ni-containing acireductone dioxygenase (Ni-ARD) produces methylthiopropionate, carbon monoxide and formate, and does not lie on the methionine recycle pathway. This is Acireductone dioxygenase 4 (ARD4) from Arabidopsis thaliana (Mouse-ear cress).